Consider the following 762-residue polypeptide: Probable inorganic carbon transporter subunit DabA (762 aa).

Zn(2+)-binding residues include Cys279, Asp281, His461, and Cys476.

Belongs to the inorganic carbon transporter (TC 9.A.2) DabA family. Forms a complex with DabB. Zn(2+) serves as cofactor.

It is found in the cell inner membrane. Part of an energy-coupled inorganic carbon pump. This Legionella pneumophila (strain Lens) protein is Probable inorganic carbon transporter subunit DabA.